A 717-amino-acid polypeptide reads, in one-letter code: MLNQRKSVEQLNEAEAAEELAFLAAELARHDMLYHGKDAPEISDADYDALKRRNDLIEERFPVLVREDSPSRKVGAAPSLTFAPVVHARPMLSLDNTFSDEDARAFVAGVYRFLGKLPDGSIAFTAEPKIDGLSMSLRYENRRLVTAATRGDGTTGENVTANVRTIGMIPQTLPADAPDVVEIRGEIYMAKSDFAALNAEMAAQGRPLYVNPRNTASGSLRQLDAKVTANRKLRFFAYAWGEMSAMPADTQLGMVETFKAWGFPVNPLMQRFFSADELLEHYHHIERERPDLDYDIDGVVYKVDRLDLQARLGFRSRSPRWATAHKFPAEQAFTRLKGIDIQVGRTGALTPVARLEPITVGGVVVTNATLHNEDYIRGVGNTGEPIRDGRDVRIGDMVIVQRAGDVIPQIVDVVMDERPEGAEPYRFPTTCPICGSHAVRDINEKTGKVDAVRRCTGGFVCRAQAVEHLKHFVSRNAFDIEGLGSKQIEFFFESEDENLRIRTAPEIFTLERRQEASLNKLENTDGFGKVSVRKLYEAINARRSIALHRLIYALGIRHVGETTAKLLARSYGSYEHFGAAMTEAAGFSGDAWNELNSIDGIGEVVARAIVEFYKEPRNLKVVSELLQEVTPESAELPVATDSPVAGKTVVFTGSLEKMTREEAKAKAESLGAKVAGSVSKKTDIVVAGPGAGSKLDKARELGVQTMDEDEWLALIGG.

NAD(+) contacts are provided by residues 44–48 (DADYD), 93–94 (SL), and Glu-127. Lys-129 serves as the catalytic N6-AMP-lysine intermediate. The NAD(+) site is built by Arg-150, Glu-186, Lys-302, and Lys-326. Residues Cys-431, Cys-434, Cys-455, and Cys-461 each contribute to the Zn(2+) site. In terms of domain architecture, BRCT spans 639-717 (ATDSPVAGKT…EDEWLALIGG (79 aa)).

This sequence belongs to the NAD-dependent DNA ligase family. LigA subfamily. It depends on Mg(2+) as a cofactor. Mn(2+) serves as cofactor.

The enzyme catalyses NAD(+) + (deoxyribonucleotide)n-3'-hydroxyl + 5'-phospho-(deoxyribonucleotide)m = (deoxyribonucleotide)n+m + AMP + beta-nicotinamide D-nucleotide.. Functionally, DNA ligase that catalyzes the formation of phosphodiester linkages between 5'-phosphoryl and 3'-hydroxyl groups in double-stranded DNA using NAD as a coenzyme and as the energy source for the reaction. It is essential for DNA replication and repair of damaged DNA. This chain is DNA ligase, found in Rhizobium meliloti (strain 1021) (Ensifer meliloti).